The primary structure comprises 373 residues: Cobalt-precorrin-5B C(1)-methyltransferase (373 aa).

The protein belongs to the CbiD family.

The enzyme catalyses Co-precorrin-5B + S-adenosyl-L-methionine = Co-precorrin-6A + S-adenosyl-L-homocysteine. It participates in cofactor biosynthesis; adenosylcobalamin biosynthesis; cob(II)yrinate a,c-diamide from sirohydrochlorin (anaerobic route): step 6/10. Catalyzes the methylation of C-1 in cobalt-precorrin-5B to form cobalt-precorrin-6A. The protein is Cobalt-precorrin-5B C(1)-methyltransferase of Halorhodospira halophila (strain DSM 244 / SL1) (Ectothiorhodospira halophila (strain DSM 244 / SL1)).